Consider the following 464-residue polypeptide: Kynureninase 2 (464 aa).

Pyridoxal 5'-phosphate contacts are provided by residues L135, T136, 163–166, D248, H251, and Y273; that span reads FPSD. K274 is modified (N6-(pyridoxal phosphate)lysine). W313 and N341 together coordinate pyridoxal 5'-phosphate.

Belongs to the kynureninase family. In terms of assembly, homodimer. Pyridoxal 5'-phosphate is required as a cofactor.

It localises to the cytoplasm. The enzyme catalyses L-kynurenine + H2O = anthranilate + L-alanine + H(+). The catalysed reaction is 3-hydroxy-L-kynurenine + H2O = 3-hydroxyanthranilate + L-alanine + H(+). Its pathway is amino-acid degradation; L-kynurenine degradation; L-alanine and anthranilate from L-kynurenine: step 1/1. The protein operates within cofactor biosynthesis; NAD(+) biosynthesis; quinolinate from L-kynurenine: step 2/3. Catalyzes the cleavage of L-kynurenine (L-Kyn) and L-3-hydroxykynurenine (L-3OHKyn) into anthranilic acid (AA) and 3-hydroxyanthranilic acid (3-OHAA), respectively. The protein is Kynureninase 2 (bna5-2) of Aspergillus fumigatus (strain CBS 144.89 / FGSC A1163 / CEA10) (Neosartorya fumigata).